Consider the following 436-residue polypeptide: MTYKEIAKKYLENNGITIGDTIKINKEDISYEGILLDRSEDSEDGYLVLKLDSGYNVGVAIENTQAELIQKGDKPKIGYGAEDIAHDPSKQNISIISTGGTVSSIIDYRTGAVHPKFTAADLIKANPELLDYANYNVKALYNILSENMQPKYWVEAAESIANDISDGSDGIVIAHGTDTLHYTAAALSFMLKTPVPIVITGAQRSSDRPSSDANMNLIDSVVAAKSDIAEVSVCMHGSLNDSYTYLHKGTKVRKMHTSRRDTFRSINYEPIAKIENHSVDINPNYRYTKRNENELEVNSAVEEKVGLIKSFPGICEELIEYHIDKGYKGLVIEGTGLGHVPDKLITPLARAHDENIPVVMTSQCLYGRVNMNVYSTGREILNAGVISGRDMTPETAYVKLSWVLGQTNDIGEVAKLMNKNIAGEFNEKSSIKYFLN.

Positions 91 to 420 (QNISIISTGG…GEVAKLMNKN (330 aa)) constitute an Asparaginase/glutaminase domain. Residues Thr101, Thr177, Asp178, and Lys254 contribute to the active site.

It belongs to the asparaginase 1 family. GatD subfamily. In terms of assembly, heterodimer of GatD and GatE.

It catalyses the reaction L-glutamyl-tRNA(Gln) + L-glutamine + ATP + H2O = L-glutaminyl-tRNA(Gln) + L-glutamate + ADP + phosphate + H(+). Functionally, allows the formation of correctly charged Gln-tRNA(Gln) through the transamidation of misacylated Glu-tRNA(Gln) in organisms which lack glutaminyl-tRNA synthetase. The reaction takes place in the presence of glutamine and ATP through an activated gamma-phospho-Glu-tRNA(Gln). The GatDE system is specific for glutamate and does not act on aspartate. The chain is Glutamyl-tRNA(Gln) amidotransferase subunit D from Methanobrevibacter smithii (strain ATCC 35061 / DSM 861 / OCM 144 / PS).